The primary structure comprises 350 residues: NADH-cytochrome b5 reductase 2 (350 aa).

A helical transmembrane segment spans residues 43–63 (PLVLALGGVAGIGAWYGLGGF). Residues 96–204 (DQFVEFTLKE…KGPIAKFAYK (109 aa)) enclose the FAD-binding FR-type domain. Residue 207–242 (EFESIGMIAGGSGITPMYQVIQDIASNPSDKTKVTL) coordinates FAD.

Belongs to the flavoprotein pyridine nucleotide cytochrome reductase family. FAD serves as cofactor.

The protein resides in the mitochondrion outer membrane. It carries out the reaction 2 Fe(III)-[cytochrome b5] + NADH = 2 Fe(II)-[cytochrome b5] + NAD(+) + H(+). Functionally, may mediate the reduction of outer membrane cytochrome b5. The chain is NADH-cytochrome b5 reductase 2 (MCR1) from Mycosarcoma maydis (Corn smut fungus).